We begin with the raw amino-acid sequence, 416 residues long: Cell division protein FtsZ (416 aa).

Residues 20–24, 107–109, Glu138, Arg142, and Asp186 contribute to the GTP site; these read GGGVN and GTG. Polar residues predominate over residues 319–335; sequence QETNANNSSPAQRQAES. A disordered region spans residues 319–416; that stretch reads QETNANNSSP…DSLDFPDFLK (98 aa). The span at 376 to 392 shows a compositional bias: acidic residues; it reads QDDDIPDDAGFDVDLPA. Over residues 404–416 the composition is skewed to basic and acidic residues; that stretch reads ARKDSLDFPDFLK.

It belongs to the FtsZ family. Homodimer. Polymerizes to form a dynamic ring structure in a strictly GTP-dependent manner. Interacts directly with several other division proteins.

It localises to the cytoplasm. Essential cell division protein that forms a contractile ring structure (Z ring) at the future cell division site. The regulation of the ring assembly controls the timing and the location of cell division. One of the functions of the FtsZ ring is to recruit other cell division proteins to the septum to produce a new cell wall between the dividing cells. Binds GTP and shows GTPase activity. This is Cell division protein FtsZ from Kocuria rhizophila (strain ATCC 9341 / DSM 348 / NBRC 103217 / DC2201).